The chain runs to 467 residues: Venom prothrombin activator omicarin-C catalytic subunit (467 aa).

The first 20 residues, 1 to 20, serve as a signal peptide directing secretion; it reads MAPQLLLCLILTFLWSLPEA. Residues 21 to 40 constitute a propeptide that is removed on maturation; it reads ESNVFLKSKVANRFLQRTKR. The region spanning 41-86 is the Gla domain; that stretch reads ANSLFEEFRSGNIERECIEERCSKEEAREVFEDDEKTETFWNVYVD. 11 positions are modified to 4-carboxyglutamate: glutamate 46, glutamate 47, glutamate 54, glutamate 56, glutamate 59, glutamate 60, glutamate 65, glutamate 66, glutamate 69, glutamate 72, and glutamate 75. Residues cysteine 57 and cysteine 62 are joined by a disulfide bond. The EGF-like 1; calcium-binding domain occupies 86–122; the sequence is DGDQCSSNPCHYRGTCKDGIGSYTCTCLFGYEGKNCE. Cystine bridges form between cysteine 90-cysteine 101, cysteine 95-cysteine 110, cysteine 112-cysteine 121, cysteine 129-cysteine 140, cysteine 136-cysteine 149, cysteine 151-cysteine 164, cysteine 172-cysteine 329, cysteine 216-cysteine 221, cysteine 236-cysteine 252, cysteine 377-cysteine 391, and cysteine 402-cysteine 430. The O-linked (Hex...) serine glycan is linked to serine 92. In terms of domain architecture, EGF-like 2 spans 129–164; the sequence is CRVDNGNCWHFCKPVQNDIQCSCAEGYLLGEDGHSC. Residues 182 to 209 constitute a propeptide, activation peptide; that stretch reads REASLPDFVQSQNATLLKKSDNPSPDIR. Residues 210 to 454 form the Peptidase S1 domain; sequence IVNGMDCKLG…FILWIKRIMR (245 aa). Histidine 251 functions as the Charge relay system in the catalytic mechanism. Asparagine 254 is a glycosylation site (N-linked (GlcNAc...) asparagine). Catalysis depends on aspartate 309, which acts as the Charge relay system. Serine 406 serves as the catalytic Charge relay system.

The protein belongs to the peptidase S1 family. Snake venom subfamily. As to quaternary structure, heterodimer of a light and a heavy chains; disulfide-linked. Is associated with omicarin-C non-catalytic subunit (AC Q58L90) in a non-covalent manner. Gamma-carboxyglutamate residues are formed by vitamin K dependent carboxylation. These residues are essential for the binding of calcium. In terms of tissue distribution, expressed by the venom gland.

The protein resides in the secreted. It catalyses the reaction Selective cleavage of Arg-|-Thr and then Arg-|-Ile bonds in prothrombin to form thrombin.. With respect to regulation, activated by calcium and negatively charged phospholipids. Its function is as follows. Snake prothrombin activator that attacks the hemostatic system of prey. This catalytic subunit is functionally similar to blood coagulation factor Xa. It requires a non-catalytic subunit present in the venom, which is similar to coagulation factor Va, to be fully active. This is Venom prothrombin activator omicarin-C catalytic subunit from Oxyuranus microlepidotus (Inland taipan).